The following is an 85-amino-acid chain: Small ribosomal subunit protein bS18A (85 aa).

The protein belongs to the bacterial ribosomal protein bS18 family. As to quaternary structure, part of the 30S ribosomal subunit. Forms a tight heterodimer with protein bS6.

In terms of biological role, binds as a heterodimer with protein bS6 to the central domain of the 16S rRNA, where it helps stabilize the platform of the 30S subunit. The sequence is that of Small ribosomal subunit protein bS18A from Mycolicibacterium smegmatis (strain ATCC 700084 / mc(2)155) (Mycobacterium smegmatis).